The following is a 149-amino-acid chain: uncharacterized protein (149 aa).

In terms of domain architecture, N-acetyltransferase spans 1-149 (MNIRQAKTSD…VHYCLNVPAK (149 aa)).

Belongs to the acetyltransferase family.

This is an uncharacterized protein from Bacillus subtilis (strain 168).